We begin with the raw amino-acid sequence, 471 residues long: 3-isopropylmalate dehydratase large subunit (471 aa).

Positions 349, 409, and 412 each coordinate [4Fe-4S] cluster.

Belongs to the aconitase/IPM isomerase family. LeuC type 1 subfamily. In terms of assembly, heterodimer of LeuC and LeuD. [4Fe-4S] cluster is required as a cofactor.

It carries out the reaction (2R,3S)-3-isopropylmalate = (2S)-2-isopropylmalate. It participates in amino-acid biosynthesis; L-leucine biosynthesis; L-leucine from 3-methyl-2-oxobutanoate: step 2/4. Its function is as follows. Catalyzes the isomerization between 2-isopropylmalate and 3-isopropylmalate, via the formation of 2-isopropylmaleate. This Aliivibrio fischeri (strain ATCC 700601 / ES114) (Vibrio fischeri) protein is 3-isopropylmalate dehydratase large subunit.